Here is a 407-residue protein sequence, read N- to C-terminus: Peptide chain release factor subunit 1 (407 aa).

Belongs to the eukaryotic release factor 1 family. In terms of assembly, heterodimer of two subunits, one of which binds GTP.

The protein resides in the cytoplasm. Directs the termination of nascent peptide synthesis (translation) in response to the termination codons UAA, UAG and UGA. This Archaeoglobus fulgidus (strain ATCC 49558 / DSM 4304 / JCM 9628 / NBRC 100126 / VC-16) protein is Peptide chain release factor subunit 1 (prf1).